The following is a 604-amino-acid chain: FAD-linked oxidoreductase easE (604 aa).

The first 25 residues, 1-25, serve as a signal peptide directing secretion; it reads MQFLLWSTGLVALLSWLIYTQETQS. 4 N-linked (GlcNAc...) asparagine glycosylation sites follow: Asn47, Asn70, Asn106, and Asn196. One can recognise an FAD-binding PCMH-type domain in the interval 125 to 308; it reads QGRIPLFTVG…TRATMRVFPD (184 aa).

Belongs to the oxygen-dependent FAD-linked oxidoreductase family. Requires FAD as cofactor.

Its pathway is alkaloid biosynthesis; ergot alkaloid biosynthesis. FAD-linked oxidoreductase; part of the gene cluster that mediates the biosynthesis of fungal ergot alkaloid. DmaW catalyzes the first step of ergot alkaloid biosynthesis by condensing dimethylallyl diphosphate (DMAP) and tryptophan to form 4-dimethylallyl-L-tryptophan. The second step is catalyzed by the methyltransferase easF that methylates 4-dimethylallyl-L-tryptophan in the presence of S-adenosyl-L-methionine, resulting in the formation of 4-dimethylallyl-L-abrine. The catalase easC and the FAD-dependent oxidoreductase easE then transform 4-dimethylallyl-L-abrine to chanoclavine-I which is further oxidized by easD in the presence of NAD(+), resulting in the formation of chanoclavine-I aldehyde. Chanoclavine-I aldehyde is the precursor of ergoamides and ergopeptines in Clavicipitaceae, and clavine-type alcaloids such as fumiclavine in Trichocomaceae. However, the metabolites downstream of chanoclavine-I aldehyde in Arthrodermataceae have not been identified yet. The sequence is that of FAD-linked oxidoreductase easE from Trichophyton verrucosum (strain HKI 0517).